Here is a 195-residue protein sequence, read N- to C-terminus: Imidazoleglycerol-phosphate dehydratase (195 aa).

This sequence belongs to the imidazoleglycerol-phosphate dehydratase family.

The protein resides in the cytoplasm. The enzyme catalyses D-erythro-1-(imidazol-4-yl)glycerol 3-phosphate = 3-(imidazol-4-yl)-2-oxopropyl phosphate + H2O. It participates in amino-acid biosynthesis; L-histidine biosynthesis; L-histidine from 5-phospho-alpha-D-ribose 1-diphosphate: step 6/9. This is Imidazoleglycerol-phosphate dehydratase from Geobacter sp. (strain M21).